The chain runs to 164 residues: DNA-directed RNA polymerase 19 kDa subunit (164 aa).

The segment covering 1-35 (MADTDDIIDYESDDLTEYEDDEEEEEDGESLETSD) has biased composition (acidic residues). Positions 1–39 (MADTDDIIDYESDDLTEYEDDEEEEEDGESLETSDIDPK) are disordered.

This sequence belongs to the poxviridae DNA-directed RNA polymerase 19 kDa subunit family. The DNA-dependent RNA polymerase used for intermediate and late genes expression consists of eight subunits Rpo30/OPG66, Rpo7/OPG90, Rpo22/OPG103, Rpo147/OPG105, Rpo18/OPG119, Rpo19/OPG131, Rpo132/OPG151 and Rpo35/OPG156. The same holoenzyme, with the addition of the transcription-specificity factor OPG109, is used for early gene expression.

It is found in the virion. It carries out the reaction RNA(n) + a ribonucleoside 5'-triphosphate = RNA(n+1) + diphosphate. Its function is as follows. Part of the DNA-dependent RNA polymerase which catalyzes the transcription of viral DNA into RNA using the four ribonucleoside triphosphates as substrates. Responsible for the transcription of early, intermediate and late genes. DNA-dependent RNA polymerase associates with the early transcription factor (ETF), itself composed of OPG118 and OPG133, thereby allowing the early genes transcription. Late transcription, and probably also intermediate transcription, require newly synthesized RNA polymerase. This Homo sapiens (Human) protein is DNA-directed RNA polymerase 19 kDa subunit (OPG131).